Reading from the N-terminus, the 194-residue chain is Imidazole glycerol phosphate synthase subunit HisH (194 aa).

The 192-residue stretch at 3 to 194 (RIAIVDLGIG…LILLRNFRRL (192 aa)) folds into the Glutamine amidotransferase type-1 domain. The active-site Nucleophile is Cys74. Catalysis depends on residues His176 and Glu178.

Heterodimer of HisH and HisF.

It localises to the cytoplasm. It carries out the reaction 5-[(5-phospho-1-deoxy-D-ribulos-1-ylimino)methylamino]-1-(5-phospho-beta-D-ribosyl)imidazole-4-carboxamide + L-glutamine = D-erythro-1-(imidazol-4-yl)glycerol 3-phosphate + 5-amino-1-(5-phospho-beta-D-ribosyl)imidazole-4-carboxamide + L-glutamate + H(+). The catalysed reaction is L-glutamine + H2O = L-glutamate + NH4(+). It functions in the pathway amino-acid biosynthesis; L-histidine biosynthesis; L-histidine from 5-phospho-alpha-D-ribose 1-diphosphate: step 5/9. Functionally, IGPS catalyzes the conversion of PRFAR and glutamine to IGP, AICAR and glutamate. The HisH subunit catalyzes the hydrolysis of glutamine to glutamate and ammonia as part of the synthesis of IGP and AICAR. The resulting ammonia molecule is channeled to the active site of HisF. The chain is Imidazole glycerol phosphate synthase subunit HisH from Pyrococcus furiosus (strain ATCC 43587 / DSM 3638 / JCM 8422 / Vc1).